Here is a 434-residue protein sequence, read N- to C-terminus: MTDAHHADDVRYQPLSEIDPEVAQAIAGELSRQRDTLEMIASENFVPRSVLQAQGSVLTNKYAEGYPGRRYYGGCEQVDIIEDLARDRAKALFDAEFANVQPHSGAQANAAVLMTLADPGDKIMGLSLAHGGHLTHGMKLNFSGKLYEVAAYGVDPDTMLVDMDQVREQAIKEQPKVIIAGWSAYPRHLDFAAFREIADEVGATLWVDMAHFAGLVAAGLHPSPVPYADVVSSTVHKTLGGPRSGIILAKQDYAKKLNSSVFPGQQGGPLMHAIAAKATALKIAGTDQFAERQARTIEGARILAERLTASDAKAAGIDVLTGGTDVHLVLADLRNSEMDGQQAEDLLHEVGITVNRNAVPFDPRPPMVTSGLRIGTPALATRGFDATAFTEVADIIGTALAQGKSADLESLQARVTKLAEQYPLYEGLEDWTIV.

(6S)-5,6,7,8-tetrahydrofolate is bound by residues Leu-128 and 132–134 (GHL). An N6-(pyridoxal phosphate)lysine modification is found at Lys-237.

It belongs to the SHMT family. In terms of assembly, homodimer. The cofactor is pyridoxal 5'-phosphate.

It is found in the cytoplasm. The enzyme catalyses (6R)-5,10-methylene-5,6,7,8-tetrahydrofolate + glycine + H2O = (6S)-5,6,7,8-tetrahydrofolate + L-serine. Its pathway is one-carbon metabolism; tetrahydrofolate interconversion. The protein operates within amino-acid biosynthesis; glycine biosynthesis; glycine from L-serine: step 1/1. In terms of biological role, catalyzes the reversible interconversion of serine and glycine with tetrahydrofolate (THF) serving as the one-carbon carrier. This reaction serves as the major source of one-carbon groups required for the biosynthesis of purines, thymidylate, methionine, and other important biomolecules. Also exhibits THF-independent aldolase activity toward beta-hydroxyamino acids, producing glycine and aldehydes, via a retro-aldol mechanism. The chain is Serine hydroxymethyltransferase from Corynebacterium efficiens (strain DSM 44549 / YS-314 / AJ 12310 / JCM 11189 / NBRC 100395).